The following is a 416-amino-acid chain: Enterobactin exporter EntS (416 aa).

Residues 1–21 lie on the Cytoplasmic side of the membrane; the sequence is MNKQSWLLNLSLLKTHPAFRA. A helical membrane pass occupies residues 22–42; the sequence is VFLARFISIVSLGLLGVAVPV. At 43 to 55 the chain is on the periplasmic side; it reads QIQMMTHSTWQVG. Residues 56-76 form a helical membrane-spanning segment; it reads LSVTLTGGAMFVGLMVGGVLA. At 77 to 83 the chain is on the cytoplasmic side; that stretch reads DRYERKK. Residues 84 to 104 traverse the membrane as a helical segment; it reads VILLARGTCGIGFIGLCLNAL. The Periplasmic segment spans residues 105–109; the sequence is LPEPS. Residues 110 to 130 form a helical membrane-spanning segment; it reads LLAIYLLGLWDGFFASLGVTA. Over 131–156 the chain is Cytoplasmic; the sequence is LLAATPALVGRENLMQAGAITMLTVR. The helical transmembrane segment at 157 to 177 threads the bilayer; it reads LGSVISPMIGGLLLATGGVAW. A topological domain (periplasmic) is located at residue N178. A helical transmembrane segment spans residues 179–199; the sequence is YGLAAAGTFITLLPLLSLPAL. Residues 200–218 lie on the Cytoplasmic side of the membrane; the sequence is PPPPQPREHPLKSLLAGFR. A helical membrane pass occupies residues 219–239; it reads FLLASPLVGGIALLGGLLTMA. Topologically, residues 240–256 are periplasmic; that stretch reads SAVRVLYPALADNWQMS. Residues 257–277 traverse the membrane as a helical segment; sequence AAQIGFLYAAIPLGAAIGALT. Topologically, residues 278 to 287 are cytoplasmic; it reads SGKLAHSARP. Residues 288 to 307 traverse the membrane as a helical segment; sequence GLLMLLSTLGSFLAIGLFGL. At 308–313 the chain is on the periplasmic side; sequence MPMWIL. A helical membrane pass occupies residues 314–336; sequence GVVCLALFGWLSAVSSLLQYTML. Residues 337–356 are Cytoplasmic-facing; the sequence is QTQTPEAMLGRINGLWTAQN. The helical transmembrane segment at 357–377 threads the bilayer; sequence VTGDAIGAALLGGLGAMMTPV. A topological domain (periplasmic) is located at residue A378. Residues 379-399 traverse the membrane as a helical segment; that stretch reads SASASGFGLLIIGVLLLLVLV. Residues 400-416 lie on the Cytoplasmic side of the membrane; the sequence is ELRHFRQTPPQVTASDS.

This sequence belongs to the major facilitator superfamily. EntS (TC 2.A.1.38) family.

The protein localises to the cell inner membrane. Functionally, component of an export pathway for enterobactin. This is Enterobactin exporter EntS from Escherichia coli (strain K12 / MC4100 / BW2952).